Consider the following 130-residue polypeptide: Small ribosomal subunit protein uS8 (130 aa).

It belongs to the universal ribosomal protein uS8 family. As to quaternary structure, part of the 30S ribosomal subunit. Contacts proteins S5 and S12.

In terms of biological role, one of the primary rRNA binding proteins, it binds directly to 16S rRNA central domain where it helps coordinate assembly of the platform of the 30S subunit. This is Small ribosomal subunit protein uS8 from Klebsiella pneumoniae subsp. pneumoniae (strain ATCC 700721 / MGH 78578).